A 428-amino-acid chain; its full sequence is 3-phosphoshikimate 1-carboxyvinyltransferase (428 aa).

Residues Lys-20, Ser-21, and Arg-25 each coordinate 3-phosphoshikimate. Lys-20 contributes to the phosphoenolpyruvate binding site. Gly-92 and Arg-120 together coordinate phosphoenolpyruvate. Residues Ser-166, Gln-168, Asp-314, and Lys-341 each contribute to the 3-phosphoshikimate site. A phosphoenolpyruvate-binding site is contributed by Gln-168. Asp-314 serves as the catalytic Proton acceptor. Arg-345 and Arg-387 together coordinate phosphoenolpyruvate.

The protein belongs to the EPSP synthase family. Monomer.

It is found in the cytoplasm. The enzyme catalyses 3-phosphoshikimate + phosphoenolpyruvate = 5-O-(1-carboxyvinyl)-3-phosphoshikimate + phosphate. It functions in the pathway metabolic intermediate biosynthesis; chorismate biosynthesis; chorismate from D-erythrose 4-phosphate and phosphoenolpyruvate: step 6/7. In terms of biological role, catalyzes the transfer of the enolpyruvyl moiety of phosphoenolpyruvate (PEP) to the 5-hydroxyl of shikimate-3-phosphate (S3P) to produce enolpyruvyl shikimate-3-phosphate and inorganic phosphate. The polypeptide is 3-phosphoshikimate 1-carboxyvinyltransferase (Listeria welshimeri serovar 6b (strain ATCC 35897 / DSM 20650 / CCUG 15529 / CIP 8149 / NCTC 11857 / SLCC 5334 / V8)).